A 476-amino-acid polypeptide reads, in one-letter code: MHVPGTFYVNDALKGLLFEELQQAVVRGDHGGFLPAVKQLANVAALPGIVKRSIALPDVHSGYGFAIGNVAAFDMDNPEAVVSPGGVGFDINCGVRLLRTNLTEAEVGPVREQLAQALFDHIPVGVGSQGIIPTTAKDMESALELGMDWSLREGYAWAEDKEHCEEYGRMLNADPRYVSSRAKKRGLPQMGTLGAGNHYAEVQVVDEVYDAVAARRMGIDTPGQVVVMIHSGSRGLGHQVATDALVAMERAMARDGIITNDRQLACARINSEEGQAYLKAMSCAANYAWVNRSSMTFLARQAFAKIFKSTPDDLDMHVVYDVSHNIAKVEQHCVDGQHRRLLVHRKGSTRAFPPHHPLIPADYQLIGQPVLVGGTMGTSSYVLTGTEQGFTETFGSTCHGAGRARSRNNSRNKLDYQDVLDNLKAKGIAIRVASPKLVMEEAPESYKDVSEVVDTCHQAGISKKAVKLRPIAVIKG.

The Mn(2+) site is built by D90, C93, H198, H230, and H324. 197 to 201 (NHYAE) contributes to the GMP binding site. GMP contacts are provided by residues 324-325 (HN), 373-376 (GGTM), S380, 399-402 (HGAG), and K475. H399 serves as the catalytic GMP-histidine intermediate.

This sequence belongs to the RtcB family. As to quaternary structure, catalytic component of the tRNA-splicing ligase complex. Requires Mn(2+) as cofactor.

The enzyme catalyses a 3'-end 3'-phospho-ribonucleotide-RNA + a 5'-end dephospho-ribonucleoside-RNA + GTP = a ribonucleotidyl-ribonucleotide-RNA + GMP + diphosphate. The catalysed reaction is a 3'-end 2',3'-cyclophospho-ribonucleotide-RNA + a 5'-end dephospho-ribonucleoside-RNA + GTP + H2O = a ribonucleotidyl-ribonucleotide-RNA + GMP + diphosphate + H(+). Functionally, catalytic subunit of the tRNA-splicing ligase complex that acts by directly joining spliced tRNA halves to mature-sized tRNAs by incorporating the precursor-derived splice junction phosphate into the mature tRNA as a canonical 3',5'-phosphodiester. May act as an RNA ligase with broad substrate specificity, and may function toward other RNAs. The chain is RNA-splicing ligase RtcB homolog from Chlamydomonas reinhardtii (Chlamydomonas smithii).